Here is a 607-residue protein sequence, read N- to C-terminus: Glutamine--fructose-6-phosphate aminotransferase [isomerizing] (607 aa).

Catalysis depends on C2, which acts as the Nucleophile; for GATase activity. The region spanning 2–217 is the Glutamine amidotransferase type-2 domain; it reads CGIIGIIGND…DGDWAVLTRN (216 aa). 2 SIS domains span residues 283-422 and 455-597; these read IGID…ARGA and VCHD…VDQP. K602 serves as the catalytic For Fru-6P isomerization activity.

As to quaternary structure, homodimer.

The protein localises to the cytoplasm. The enzyme catalyses D-fructose 6-phosphate + L-glutamine = D-glucosamine 6-phosphate + L-glutamate. In terms of biological role, catalyzes the first step in hexosamine metabolism, converting fructose-6P into glucosamine-6P using glutamine as a nitrogen source. In Brucella abortus biovar 1 (strain 9-941), this protein is Glutamine--fructose-6-phosphate aminotransferase [isomerizing].